The chain runs to 489 residues: Glycogen synthase (489 aa).

Arg20 provides a ligand contact to ADP-alpha-D-glucose.

This sequence belongs to the glycosyltransferase 1 family. Bacterial/plant glycogen synthase subfamily.

The catalysed reaction is [(1-&gt;4)-alpha-D-glucosyl](n) + ADP-alpha-D-glucose = [(1-&gt;4)-alpha-D-glucosyl](n+1) + ADP + H(+). Its pathway is glycan biosynthesis; glycogen biosynthesis. Synthesizes alpha-1,4-glucan chains using ADP-glucose. This is Glycogen synthase from Chlorobium limicola (strain DSM 245 / NBRC 103803 / 6330).